The following is a 531-amino-acid chain: 4-hydroxyphenylacetaldehyde oxime monooxygenase (531 aa).

A helical transmembrane segment spans residues 18–38; the sequence is WQTCLLVLLPVLLVSYYLLTS. Heme b-binding residues include arginine 122, arginine 151, arginine 466, and cysteine 468.

It belongs to the cytochrome P450 family. Requires heme b as cofactor.

It is found in the endoplasmic reticulum membrane. It carries out the reaction (E)-4-hydroxyphenylacetaldehyde oxime + reduced [NADPH--hemoprotein reductase] + O2 = (S)-4-hydroxymandelonitrile + oxidized [NADPH--hemoprotein reductase] + 2 H2O + H(+). The enzyme catalyses (E)-4-hydroxyphenylacetaldehyde oxime = (Z)-(4-hydroxyphenyl)acetaldehyde oxime. The catalysed reaction is (Z)-(4-hydroxyphenyl)acetaldehyde oxime = 4-hydroxyphenylacetonitrile + H2O. It catalyses the reaction 4-hydroxyphenylacetonitrile + reduced [NADPH--hemoprotein reductase] + O2 = (S)-4-hydroxymandelonitrile + oxidized [NADPH--hemoprotein reductase] + H2O + H(+). Its pathway is secondary metabolite biosynthesis; dhurrin biosynthesis; dhurrin from L-tyrosine: step 2/3. Functionally, cytochrome P450 involved in the biosynthesis of the cyanogenic glucoside dhurrin. Catalyzes the conversion of p-hydroxyphenylacetaldoxime to p-hydroxymandelonitrile via three different and successive activities: isomerization of the (E) isomer to the (Z) isomer of p-hydroxyphenylacetaldoxime, followed by dehydration of the oxime to the corresponding nitrile, and C-hydroxylation of the nitrile to produce p-hydroxymandelonitrile. In Sorghum bicolor (Sorghum), this protein is 4-hydroxyphenylacetaldehyde oxime monooxygenase.